We begin with the raw amino-acid sequence, 179 residues long: Large ribosomal subunit protein uL5 (179 aa).

The protein belongs to the universal ribosomal protein uL5 family. In terms of assembly, part of the 50S ribosomal subunit; part of the 5S rRNA/L5/L18/L25 subcomplex. Contacts the 5S rRNA and the P site tRNA. Forms a bridge to the 30S subunit in the 70S ribosome.

Functionally, this is one of the proteins that bind and probably mediate the attachment of the 5S RNA into the large ribosomal subunit, where it forms part of the central protuberance. In the 70S ribosome it contacts protein S13 of the 30S subunit (bridge B1b), connecting the 2 subunits; this bridge is implicated in subunit movement. Contacts the P site tRNA; the 5S rRNA and some of its associated proteins might help stabilize positioning of ribosome-bound tRNAs. This chain is Large ribosomal subunit protein uL5, found in Photobacterium profundum (strain SS9).